We begin with the raw amino-acid sequence, 35 residues long: Mu/omega-theraphotoxin-Tap1a (35 aa).

Intrachain disulfides connect cysteine 3–cysteine 18, cysteine 10–cysteine 23, and cysteine 17–cysteine 30.

It belongs to the neurotoxin 10 (Hwtx-1) family. 59 (Tltx) subfamily. As to expression, expressed by the venom gland.

The protein localises to the secreted. In terms of biological role, gating-modifier toxin that inhibits both sodium (Nav) and calcium (Cav3) channels by inducing hyperpolarizing shift in voltage-dependence of activation and steady state inactivation. Inhibits Nav1.1/SCN1A, Nav1.2/SCN2A, Nav1.3/SCN3A, Nav1.6/SCN6A, Nav1.7/SCN9A and Cav3.1/CACNA1G sodium and calcium channels at nanomolar concentrations (IC(50)=81-301 nM). Surprisingly, selectively slows fast inactivation of Nav1.3/SCN3A. Also shows moderate inhibition of Cav3.2/CACNA1H calcium channels (IC(50)=1233 nM). Ex vivo, nearly ablates neuronal mechanosensitivity in afferent fibers innervating the colon and the bladder. In vivo, in a mouse model of irritable bowel syndrome, intracolonic administration of the toxin reverses colonic mechanical hypersensitivity. In Theraphosa apophysis (Goliath pinkfoot tarantula), this protein is Mu/omega-theraphotoxin-Tap1a.